The chain runs to 354 residues: Glutamine synthetase (354 aa).

The GS beta-grasp domain maps to 22–101 (IQAEYVWIDG…VLAETYNNDG (80 aa)). The GS catalytic domain maps to 108 to 354 (HRHHAKKVFD…IIAETTILDK (247 aa)).

The protein belongs to the glutamine synthetase family. Homooctamer.

Its subcellular location is the cytoplasm. It catalyses the reaction L-glutamate + NH4(+) + ATP = L-glutamine + ADP + phosphate + H(+). In Agaricus bisporus (White button mushroom), this protein is Glutamine synthetase (glnA).